A 215-amino-acid polypeptide reads, in one-letter code: HTH-type transcriptional repressor FabR (215 aa).

An HTH tetR-type domain is found at 10-70 (KTRRSLVEAA…TMVDESGLML (61 aa)). A DNA-binding region (H-T-H motif) is located at residues 33 to 52 (SLREVAREAGIAPTSFYRHF).

As to quaternary structure, homodimer.

The protein localises to the cytoplasm. In terms of biological role, represses the transcription of fabB, involved in unsaturated fatty acid (UFA) biosynthesis. By controlling UFA production, FabR directly influences the physical properties of the membrane bilayer. This is HTH-type transcriptional repressor FabR from Escherichia coli O1:K1 / APEC.